A 793-amino-acid polypeptide reads, in one-letter code: Probable phosphoketolase (793 aa).

This sequence belongs to the XFP family. Thiamine diphosphate serves as cofactor.

The polypeptide is Probable phosphoketolase (Streptomyces avermitilis (strain ATCC 31267 / DSM 46492 / JCM 5070 / NBRC 14893 / NCIMB 12804 / NRRL 8165 / MA-4680)).